The chain runs to 303 residues: Bifunctional protein FolD (303 aa).

NADP(+) is bound by residues 175–177 (GVS) and I243.

The protein belongs to the tetrahydrofolate dehydrogenase/cyclohydrolase family. In terms of assembly, homodimer.

It carries out the reaction (6R)-5,10-methylene-5,6,7,8-tetrahydrofolate + NADP(+) = (6R)-5,10-methenyltetrahydrofolate + NADPH. It catalyses the reaction (6R)-5,10-methenyltetrahydrofolate + H2O = (6R)-10-formyltetrahydrofolate + H(+). The protein operates within one-carbon metabolism; tetrahydrofolate interconversion. Its function is as follows. Catalyzes the oxidation of 5,10-methylenetetrahydrofolate to 5,10-methenyltetrahydrofolate and then the hydrolysis of 5,10-methenyltetrahydrofolate to 10-formyltetrahydrofolate. The sequence is that of Bifunctional protein FolD from Xanthomonas euvesicatoria pv. vesicatoria (strain 85-10) (Xanthomonas campestris pv. vesicatoria).